Here is a 380-residue protein sequence, read N- to C-terminus: Probable peptidoglycan glycosyltransferase FtsW (380 aa).

Transmembrane regions (helical) follow at residues 14–34, 52–72, 79–99, 112–131, 141–161, 162–182, 188–208, 268–288, 304–324, and 341–361; these read LLWCTLCLLLIGVTMVTSSSI, ILYLVILFFIFKIFLDVPISF, IILLISISTLLLVLIIGNSIH, MQPSELSKLAMFCYLSNYLS, FGGFLKPIIIISFPLILLLVE, PDLGTTIVILLTTLSLLFISG, FIPTILIIVVTTTVLIIKSPY, IIGEELGYIGACTILFMIFFI, IFFSGYFAFSIGLWLIFQTLI, and PLISYGGSSLIIVSIAIIILI.

This sequence belongs to the SEDS family. FtsW subfamily.

The protein resides in the cell membrane. It carries out the reaction [GlcNAc-(1-&gt;4)-Mur2Ac(oyl-L-Ala-gamma-D-Glu-L-Lys-D-Ala-D-Ala)](n)-di-trans,octa-cis-undecaprenyl diphosphate + beta-D-GlcNAc-(1-&gt;4)-Mur2Ac(oyl-L-Ala-gamma-D-Glu-L-Lys-D-Ala-D-Ala)-di-trans,octa-cis-undecaprenyl diphosphate = [GlcNAc-(1-&gt;4)-Mur2Ac(oyl-L-Ala-gamma-D-Glu-L-Lys-D-Ala-D-Ala)](n+1)-di-trans,octa-cis-undecaprenyl diphosphate + di-trans,octa-cis-undecaprenyl diphosphate + H(+). The protein operates within cell wall biogenesis; peptidoglycan biosynthesis. Its function is as follows. Peptidoglycan polymerase that is essential for cell division. The polypeptide is Probable peptidoglycan glycosyltransferase FtsW (Buchnera aphidicola subsp. Baizongia pistaciae (strain Bp)).